Reading from the N-terminus, the 543-residue chain is EH domain-containing protein 2 (543 aa).

At Ser-3 the chain carries Phosphoserine. In terms of domain architecture, Dynamin-type G spans 55-286 (FDGKPMVLVA…DLFRDIQGLP (232 aa)). The interval 65-72 (GQYSTGKT) is G1 motif. 65-72 (GQYSTGKT) contributes to the ATP binding site. Residues 91–92 (EP) are G2 motif. Residues 120–122 (KPF) carry the KPF loop; caveolar targeting motif. The G3 motif stretch occupies residues 153 to 156 (DTPG). The tract at residues 219-222 (NKAD) is G4 motif. An ATP-binding site is contributed by Lys-220. Residue Val-243 is a region of interest, G5 motif. Position 258 (Trp-258) interacts with ATP. The mediates membrane-binding stretch occupies residues 320–340 (SVFGKENKKKQLILKLPVIFA). 5 positions are modified to phosphoserine: Ser-438, Ser-468, Ser-470, Ser-484, and Ser-493. Residues 449 to 537 (DKSKYDEIFY…RRLVPPSKRR (89 aa)) enclose the EH domain. Positions 481-516 (LPNSVLGRIWKLSDVDRDGMLDDEEFALASHLIEAK) constitute an EF-hand domain. Positions 494, 496, 498, 500, and 505 each coordinate Ca(2+). The tract at residues 523 to 543 (PANLPRRLVPPSKRRHKGSAE) is disordered. Over residues 534–543 (SKRRHKGSAE) the composition is skewed to basic residues.

The protein belongs to the TRAFAC class dynamin-like GTPase superfamily. Dynamin/Fzo/YdjA family. EHD subfamily. Homodimer and homooligomer. Interacts with EHD1. May also interact with EHD3 and EHD4. Interacts with MYOF. Interacts with EHBP1. Interacts with FER1L5 (via second C2 domain). Interacts with CAV1 in a cholesterol-dependent manner. Interacts (via EH domain) with PACSIN2 (via NPF motifs); this interaction probably stabilizes the caveolae. In terms of tissue distribution, highly expressed in heart and moderately expressed in placenta, lung, and skeletal muscle.

Its subcellular location is the cell membrane. The protein localises to the membrane. It localises to the caveola. It is found in the endosome membrane. The protein resides in the cytoplasm. Its subcellular location is the cytosol. The very low intrinsic ATPase activity is increased upon interaction with liposomes. ATP- and membrane-binding protein that controls membrane reorganization/tubulation upon ATP hydrolysis. Plays a role in membrane trafficking between the plasma membrane and endosomes. Important for the internalization of GLUT4. Required for fusion of myoblasts to skeletal muscle myotubes. Required for normal translocation of FER1L5 to the plasma membrane. Regulates the equilibrium between cell surface-associated and cell surface-dissociated caveolae by constraining caveolae at the cell membrane. In Homo sapiens (Human), this protein is EH domain-containing protein 2.